A 495-amino-acid chain; its full sequence is Cytochrome P450 94C1 (495 aa).

Residues 2–22 (LLIISFTIVSFFFIIIFSLFH) form a helical membrane-spanning segment. Cys439 contributes to the heme binding site.

Belongs to the cytochrome P450 family. It depends on heme as a cofactor.

The protein localises to the membrane. It is found in the endoplasmic reticulum membrane. It catalyses the reaction a 12-hydroxyjasmonyl-L-alpha-amino acid + 2 reduced [NADPH--hemoprotein reductase] + 2 O2 = a 12-hydroxy-12-oxojasmonyl-L-alpha-amino acid + 2 oxidized [NADPH--hemoprotein reductase] + 3 H2O + 3 H(+). Functionally, involved in the oxidation of the plant hormone jasmonoyl-L-isoleucine (JA-Ile), a bioactive phytohormone of the jasmonate-mediated signaling pathway. Converts 12-hydroxy-JA-Ile (12OH-JA-Ile) to the carboxy-derivative 12COOH-JA-Ile. Exerts negative feedback control on JA-Ile levels and plays a role in attenuation of jasmonate responses. Also functions as in-chain fatty acids hydroxylase in vitro. Catalyzes the hydroxylation of 12-hydroxy-jasmonoyl-L-phenylalanine (12OH-JA-Phe) in vitro. Converts 12OH-JA-Phe to the carboxy-derivative 12COOH-JA-Phe. In Arabidopsis thaliana (Mouse-ear cress), this protein is Cytochrome P450 94C1.